A 2138-amino-acid polypeptide reads, in one-letter code: Non-reducing polyketide synthase rads2 (2138 aa).

The interval 11 to 249 (LIFGDQTDSW…NPLNIHALQH (239 aa)) is N-terminal acylcarrier protein transacylase (SAT) domain. Residues 373–804 (SGRIAIVGMA…GGNACMLLED (432 aa)) form the Ketosynthase family 3 (KS3) domain. Residues Cys549, His684, and His724 each act as for beta-ketoacyl synthase activity in the active site. Residues 901-1184 (VFVFGGQGSH…KGVCTSFVRA (284 aa)) are malonyl-CoA:ACP transacylase (MAT) domain. Ser992 serves as the catalytic For acyl/malonyl transferase activity. Residues 1291 to 1437 (AQYVVQESPS…KDVQRLQADW (147 aa)) are N-terminal hotdog fold. The region spanning 1291-1610 (AQYVVQESPS…FHEISNATLK (320 aa)) is the PKS/mFAS DH domain. Residues 1303-1607 (KKIQVTFRAS…GLEFHEISNA (305 aa)) are product template (PT) domain. The tract at residues 1459–1610 (HGHRFQPDIF…FHEISNATLK (152 aa)) is C-terminal hotdog fold. Positions 1618–1666 (SKSVLKPDNAAPLKAPEKKEDATPTAPKKSADPGKEEEEEGDTATPAAV) are disordered. Residues 1666-1740 (VGEFEVIIQT…DLRRAFAMAP (75 aa)) form the Carrier domain. At Ser1700 the chain carries O-(pantetheine 4'-phosphoryl)serine. Low complexity predominate over residues 1740-1771 (PSSSSSTSASESVSESLDDSSSTSRSATPSSS). 2 disordered regions span residues 1740–1781 (PSSS…GFVE) and 1807–1828 (QATKVQPQAPAATAADNDSSPA). The segment at 1860–2006 (ADGTGSIATY…TRRHLGAMFS (147 aa)) is thioesterase (TE) domain.

It functions in the pathway secondary metabolite biosynthesis. In terms of biological role, non-reducing polyketide synthase; part of the gene cluster that mediates the biosynthesis of radicicol, a resorcylic acid lactone (RAL) that irreversibly inhibits the HSP90 molecular chaperone, an important target for cancer chemotherapy. The cluster encodes only two apparent post-PKS enzymes, a cytochrome P450 monooxygenase (radP) and a non-heme halogenase (radH) that introduce the epoxide and the chlorine, respectively. If this cluster includes all the genes required for radicicol biosynthesis, the remaining structural features of radicicol are presumably generated by the PKSs rads1 and rads2. The C-2' ketone could arise if the R-PKS rads1 and NR-PKS rads2 each carry out four iterations, in contrast to the five iteration-three iteration split for the hypothemycin PKSs. The origin of the cis 5',6' double bond is not known. The radicicol R-PKS rads1 ER domain may catalyze either double bond isomerization or reduction in the third iteration. This Floropilus chiversii (Chaetomium chiversii) protein is Non-reducing polyketide synthase rads2.